The sequence spans 118 residues: Ribonuclease P protein component (118 aa).

It belongs to the RnpA family. As to quaternary structure, consists of a catalytic RNA component (M1 or rnpB) and a protein subunit.

The enzyme catalyses Endonucleolytic cleavage of RNA, removing 5'-extranucleotides from tRNA precursor.. RNaseP catalyzes the removal of the 5'-leader sequence from pre-tRNA to produce the mature 5'-terminus. It can also cleave other RNA substrates such as 4.5S RNA. The protein component plays an auxiliary but essential role in vivo by binding to the 5'-leader sequence and broadening the substrate specificity of the ribozyme. This is Ribonuclease P protein component from Rickettsia canadensis (strain McKiel).